The primary structure comprises 200 residues: Elongation factor Ts (200 aa).

Residues 81 to 84 (TDFV) form an involved in Mg(2+) ion dislocation from EF-Tu region.

The protein belongs to the EF-Ts family.

Its subcellular location is the cytoplasm. Associates with the EF-Tu.GDP complex and induces the exchange of GDP to GTP. It remains bound to the aminoacyl-tRNA.EF-Tu.GTP complex up to the GTP hydrolysis stage on the ribosome. This is Elongation factor Ts from Nitratidesulfovibrio vulgaris (strain DSM 19637 / Miyazaki F) (Desulfovibrio vulgaris).